The following is a 501-amino-acid chain: Cytochrome P450 3A6 (501 aa).

Residue C440 coordinates heme.

Belongs to the cytochrome P450 family. It depends on heme as a cofactor.

It is found in the endoplasmic reticulum membrane. The protein resides in the microsome membrane. It carries out the reaction an organic molecule + reduced [NADPH--hemoprotein reductase] + O2 = an alcohol + oxidized [NADPH--hemoprotein reductase] + H2O + H(+). Exhibits progesterone 6 beta-hydroxylase activity. This is Cytochrome P450 3A6 (CYP3A6) from Oryctolagus cuniculus (Rabbit).